The primary structure comprises 284 residues: Pantothenate synthetase (284 aa).

Residue 32–39 coordinates ATP; the sequence is MGALHEGH. His39 functions as the Proton donor in the catalytic mechanism. Gln63 contacts (R)-pantoate. Gln63 contacts beta-alanine. 149–152 serves as a coordination point for ATP; it reads GEKD. Gln155 serves as a coordination point for (R)-pantoate. ATP-binding positions include Val178 and 186–189; that span reads LSSR.

The protein belongs to the pantothenate synthetase family. As to quaternary structure, homodimer.

It localises to the cytoplasm. The enzyme catalyses (R)-pantoate + beta-alanine + ATP = (R)-pantothenate + AMP + diphosphate + H(+). It functions in the pathway cofactor biosynthesis; (R)-pantothenate biosynthesis; (R)-pantothenate from (R)-pantoate and beta-alanine: step 1/1. Functionally, catalyzes the condensation of pantoate with beta-alanine in an ATP-dependent reaction via a pantoyl-adenylate intermediate. The polypeptide is Pantothenate synthetase (Chelativorans sp. (strain BNC1)).